Consider the following 182-residue polypeptide: Meiotic recombination protein REC104 (182 aa).

Interacts with REC114 and SPO11.

Potential transcriptional regulator that is required to activate expression of a number of early meiotic genes including HOP1. The chain is Meiotic recombination protein REC104 (REC104) from Saccharomyces cerevisiae (strain ATCC 204508 / S288c) (Baker's yeast).